Reading from the N-terminus, the 231-residue chain is 7-cyano-7-deazaguanine synthase (231 aa).

Residue 8-18 (FSGGQDSTTCL) coordinates ATP. The Zn(2+) site is built by cysteine 188, cysteine 197, cysteine 200, and cysteine 203.

This sequence belongs to the QueC family. Zn(2+) serves as cofactor.

The catalysed reaction is 7-carboxy-7-deazaguanine + NH4(+) + ATP = 7-cyano-7-deazaguanine + ADP + phosphate + H2O + H(+). It participates in purine metabolism; 7-cyano-7-deazaguanine biosynthesis. Functionally, catalyzes the ATP-dependent conversion of 7-carboxy-7-deazaguanine (CDG) to 7-cyano-7-deazaguanine (preQ(0)). The chain is 7-cyano-7-deazaguanine synthase from Sodalis glossinidius (strain morsitans).